We begin with the raw amino-acid sequence, 490 residues long: ATP synthase subunit beta, chloroplastic (490 aa).

170–177 (GGAGVGKT) serves as a coordination point for ATP.

Belongs to the ATPase alpha/beta chains family. As to quaternary structure, F-type ATPases have 2 components, CF(1) - the catalytic core - and CF(0) - the membrane proton channel. CF(1) has five subunits: alpha(3), beta(3), gamma(1), delta(1), epsilon(1). CF(0) has four main subunits: a(1), b(1), b'(1) and c(9-12).

It is found in the plastid. The protein localises to the chloroplast thylakoid membrane. The enzyme catalyses ATP + H2O + 4 H(+)(in) = ADP + phosphate + 5 H(+)(out). Its function is as follows. Produces ATP from ADP in the presence of a proton gradient across the membrane. The catalytic sites are hosted primarily by the beta subunits. The chain is ATP synthase subunit beta, chloroplastic from Calystegia sepium (Hedge bindweed).